We begin with the raw amino-acid sequence, 224 residues long: Large ribosomal subunit protein uL3 (224 aa).

Position 158 is an N5-methylglutamine (Gln158).

Belongs to the universal ribosomal protein uL3 family. As to quaternary structure, part of the 50S ribosomal subunit. Forms a cluster with proteins L14 and L19. Methylated by PrmB.

One of the primary rRNA binding proteins, it binds directly near the 3'-end of the 23S rRNA, where it nucleates assembly of the 50S subunit. The sequence is that of Large ribosomal subunit protein uL3 from Acidovorax sp. (strain JS42).